Here is a 177-residue protein sequence, read N- to C-terminus: Probetacellulin (177 aa).

Positions 1–31 are cleaved as a signal peptide; sequence MDPTAPGSSVSSLPLLLVLALGLAILHCVVA. Residues 32–118 are Extracellular-facing; the sequence is DGNTTRTPET…LFYLQQDRGQ (87 aa). 3 N-linked (GlcNAc...) asparagine glycosylation sites follow: N34, N42, and N52. The EGF-like domain occupies 65-105; it reads HFSRCPKQYKHYCIHGRCRFVVDEQTPSCICEKGYFGARCE. 3 disulfide bridges follow: C69-C82, C77-C93, and C95-C104. A propeptide spans 112-177 (removed in mature form); sequence LQQDRGQILV…SEDIQETNIA (66 aa). The chain crosses the membrane as a helical span at residues 119 to 139; the sequence is ILVVCLIVVMVVFIILVIGVC. The Cytoplasmic segment spans residues 140–177; it reads TCCHPLRKHRKKKKEEKMETLDKDKTPISEDIQETNIA. A disordered region spans residues 153–177; sequence KEEKMETLDKDKTPISEDIQETNIA. Over residues 154 to 167 the composition is skewed to basic and acidic residues; sequence EEKMETLDKDKTPI.

As to quaternary structure, monomer. Interacts with EGFR and ERBB4. Found in several mouse tissues including kidney, uterus and liver, as well as in beta tumor cell line and MCF-7 cells. It is not detected in the brain.

It localises to the secreted. The protein localises to the extracellular space. Its subcellular location is the cell membrane. Growth factor that binds to EGFR, ERBB4 and other EGF receptor family members. Potent mitogen for retinal pigment epithelial cells and vascular smooth muscle cells. This chain is Probetacellulin (Btc), found in Mus musculus (Mouse).